Reading from the N-terminus, the 83-residue chain is Cytochrome b559 subunit alpha (83 aa).

A helical membrane pass occupies residues 21–35; that stretch reads VIHSITIPSLFIAGW. Histidine 23 is a heme binding site.

The protein belongs to the PsbE/PsbF family. As to quaternary structure, heterodimer of an alpha subunit and a beta subunit. PSII is composed of 1 copy each of membrane proteins PsbA, PsbB, PsbC, PsbD, PsbE, PsbF, PsbH, PsbI, PsbJ, PsbK, PsbL, PsbM, PsbT, PsbX, PsbY, PsbZ, Psb30/Ycf12, at least 3 peripheral proteins of the oxygen-evolving complex and a large number of cofactors. It forms dimeric complexes. Heme b serves as cofactor.

Its subcellular location is the plastid. The protein localises to the chloroplast thylakoid membrane. In terms of biological role, this b-type cytochrome is tightly associated with the reaction center of photosystem II (PSII). PSII is a light-driven water:plastoquinone oxidoreductase that uses light energy to abstract electrons from H(2)O, generating O(2) and a proton gradient subsequently used for ATP formation. It consists of a core antenna complex that captures photons, and an electron transfer chain that converts photonic excitation into a charge separation. This chain is Cytochrome b559 subunit alpha, found in Tupiella akineta (Green alga).